The following is a 118-amino-acid chain: DNA-binding protein inhibitor ID-3-B (118 aa).

Residues 32 to 84 enclose the bHLH domain; sequence SLKGAGIDETMGLLYDMNGCYSKLKELVPGIPQGSKLSQVEILQHVIDYIFDL.

In terms of assembly, homodimer. Heterodimer with other HLH proteins. Interacts (via HLH domain) with the bHLH protein hes4/hairy2 (via Orange domain). Interacts with stat3.

The protein resides in the nucleus. Transcriptional regulator (lacking a basic DNA binding domain) which negatively regulates the basic helix-loop-helix (bHLH) transcription factors by forming heterodimers and inhibiting their DNA binding and transcriptional activity. Influences cell fate decisions in the embryo by sequestering and blocking the activity of the bHLH transcription factors that control these decisions. Inhibits the binding of myogenic bHLH-containing complexes to E-box DNA, thereby preventing activation of muscle-specific target genes. Also inhibits the activity of neurogenic factor neurod1/neuroD. Plays a role in cell cycle progression and survival of neural crest progenitors; binding to either hes4-B/hairy2b or stat3 blocks the formation of transcription factor complexes and the repressor function of hes4-B/hairy2B, to allow neural crest progenitors to differentiate. May play a role in the regulation of the circadian rhythm. The sequence is that of DNA-binding protein inhibitor ID-3-B (id3-b) from Xenopus laevis (African clawed frog).